A 635-amino-acid polypeptide reads, in one-letter code: Threonine--tRNA ligase (635 aa).

The 62-residue stretch at 1-62 (MITITLPDGS…EHDAILRIIT (62 aa)) folds into the TGS domain. Residues 244 to 535 (DHRKIGKAQD…LIEHYAGIWP (292 aa)) form a catalytic region. The Zn(2+) site is built by Cys-335, His-386, and His-512.

This sequence belongs to the class-II aminoacyl-tRNA synthetase family. Homodimer. Zn(2+) is required as a cofactor.

It localises to the cytoplasm. The enzyme catalyses tRNA(Thr) + L-threonine + ATP = L-threonyl-tRNA(Thr) + AMP + diphosphate + H(+). Catalyzes the attachment of threonine to tRNA(Thr) in a two-step reaction: L-threonine is first activated by ATP to form Thr-AMP and then transferred to the acceptor end of tRNA(Thr). Also edits incorrectly charged L-seryl-tRNA(Thr). The chain is Threonine--tRNA ligase from Xylella fastidiosa (strain M12).